The chain runs to 385 residues: Citrate synthase (385 aa).

Residues His-223, His-263, and Asp-318 contribute to the active site.

It belongs to the citrate synthase family. In terms of assembly, homodimer.

The enzyme catalyses oxaloacetate + acetyl-CoA + H2O = citrate + CoA + H(+). Its pathway is carbohydrate metabolism; tricarboxylic acid cycle; isocitrate from oxaloacetate: step 1/2. With respect to regulation, allosterically inhibited by NADH. This Thermoplasma acidophilum (strain ATCC 25905 / DSM 1728 / JCM 9062 / NBRC 15155 / AMRC-C165) protein is Citrate synthase (gltA).